The sequence spans 869 residues: H(+)/Cl(-) exchange transporter 6 (869 aa).

The Cytoplasmic portion of the chain corresponds to 1–80; the sequence is MAGCRGSLCC…KKGRRYEAVK (80 aa). 2 helical membrane-spanning segments follow: residues 81–113 and 128–150; these read WMVVFAIGVCTGLVGLFVDFFVRLFTQLKFGVV and LSLLELLGFNLTFVFLASLLVLI. Residues 156-160 carry the Selectivity filter part_1 motif; the sequence is GSGIP. Ser-157 provides a ligand contact to chloride. An intramembrane region (helical) is located at residues 159–166; that stretch reads IPEVKCYL. 2 helical membrane passes run 176 to 194 and 200 to 217; these read RLRTLLCKVLGVLFSVAGG and EGPMIHSGSVVGAGLPQF. Positions 198–202 match the Selectivity filter part_2 motif; the sequence is EKEGP. Intramembrane regions (helical) lie at residues 241-253 and 257-265; these read FVSAGAAAGVAAA and PIGGTLFSL. The next 3 helical transmembrane spans lie at 277–294, 335–364, and 371–392; these read TWKVLFCSMSATFTLNFF, GFFVVMGVIGGLLGATFNCLNKRLAKYRMR, and KLVRVLESLLVSLVTTVVVFVA. Residues Asn-410, Asn-422, and Asn-432 are each glycosylated (N-linked (GlcNAc...) asparagine). 2 helical membrane passes run 462-481 and 487-511; these read PVTLALFFVLYFLLACWTYG and GLFVPSLLCGAAFGRLVANVLKSYI. A Selectivity filter part_3 motif is present at residues 487-491; sequence GLFVP. Phe-489 is a binding site for chloride. Positions 519-533 form an intramembrane region, helical; the sequence is GTFALIGAAAFLGGV. Positions 534–536 form an intramembrane region, note=Loop between two helices; sequence VRM. The segment at residues 537-548 is an intramembrane region (helical); sequence TISLTVILIEST. Positions 549-552 form an intramembrane region, note=Loop between two helices; that stretch reads NEIT. A helical membrane pass occupies residues 553 to 571; sequence YGLPIMVTLMVAKWTGDFF. The Cytoplasmic segment spans residues 572-869; that stretch reads NKGIYDIHVG…ARLRQHYQTI (298 aa). Tyr-576 contacts chloride. A CBS 1 domain is found at 605-662; sequence MEPNLTYVYPHTRIQSLVSILRTTVHHAFPVVTENRGNEKEFMKGNQLISNNIKFKKS. 630–632 lines the ATP pocket; that stretch reads HHA. Ser-773 is modified (phosphoserine). The CBS 2 domain occupies 807–868; sequence MNPSPFTVSP…QARLRQHYQT (62 aa). 849 to 852 contacts ATP; sequence TRHN.

The protein belongs to the chloride channel (TC 2.A.49) family. ClC-6/CLCN6 subfamily. N-glycosylated on several asparagine residues. In terms of tissue distribution, testis, ovary, small intestine, brain and skeletal muscle. Low level expression in aortic and coronary vascular smooth muscle cells, and aortic endothelial cells. Isoform 3 is only detected in kidney.

It is found in the late endosome membrane. The enzyme catalyses 2 chloride(in) + H(+)(out) = 2 chloride(out) + H(+)(in). Functionally, voltage-gated channel mediating the exchange of chloride ions against protons. Functions as antiporter and contributes to the acidification of the late endosome lumen. The CLC channel family contains both chloride channels and proton-coupled anion transporters that exchange chloride or another anion for protons. The presence of conserved gating glutamate residues is typical for family members that function as antiporters. The polypeptide is H(+)/Cl(-) exchange transporter 6 (Homo sapiens (Human)).